We begin with the raw amino-acid sequence, 393 residues long: Dual specificity mitogen-activated protein kinase kinase 1 (393 aa).

Residues 1 to 27 (MPKKKPTPIQLNPAPDGSAVNGTSSAE) are disordered. A Protein kinase domain is found at 68–361 (FEKISELGAG…LKQLMVHAFI (294 aa)). ATP is bound by residues 74–82 (LGAGNGGVV) and Lys97. The active-site Proton acceptor is the Asp190. Phosphoserine; by RAF occurs at positions 218 and 222. An RAF1-binding region spans residues 270-307 (ELELMFGCQVEGDAAETPPRPRTPGRPLSSYGMDSRPP). Position 286 is a phosphothreonine (Thr286). Residue Thr292 is modified to Phosphothreonine; by MAPK1. Ser298 is modified (phosphoserine; by PAK).

This sequence belongs to the protein kinase superfamily. STE Ser/Thr protein kinase family. MAP kinase kinase subfamily. Found in a complex with at least BRAF, HRAS, MAP2K1, MAPK3/ERK1 and RGS14. Forms a heterodimer with MAP2K2/MEK2. Forms heterodimers with KSR2 which further dimerize to form tetramers. Interacts with KSR1 or KSR2 and BRAF; the interaction with KSR1 or KSR2 mediates KSR1-BRAF or KSR2-BRAF dimerization. Interacts with ARBB2, LAMTOR3, MAPK1/ERK2 and RAF1. Interacts with MAPK1/ERK2. Interacts with MORG1. Interacts with PPARG. Interacts with SGK1. Interacts with BIRC6/bruce. Interacts with KAT7; the interaction promotes KAT7 phosphorylation. Interacts with RAF1 and NEK10; the interaction is required for ERK1/2-signaling pathway activation in response to UV irradiation. Interacts with TRAF3IP3. Interacts with MOS. Post-translationally, phosphorylation at Ser-218 and Ser-222 by MAP kinase kinase kinases (RAF or MEKK1) positively regulates the kinase activity. Also phosphorylated at Thr-292 by MAPK1/ERK2 and at Ser-298 by PAK. MAPK1/ERK2 phosphorylation of Thr-292 occurs in response to cellular adhesion and leads to inhibition of Ser-298 phosphorylation by PAK. Autophosphorylated at Ser-218 and Ser-222, autophosphosphorylation is promoted by NEK10 following UV irradiation.

The protein resides in the cytoplasm. It is found in the cytoskeleton. It localises to the microtubule organizing center. The protein localises to the centrosome. Its subcellular location is the spindle pole body. The protein resides in the nucleus. It is found in the membrane. It carries out the reaction L-seryl-[protein] + ATP = O-phospho-L-seryl-[protein] + ADP + H(+). The enzyme catalyses L-threonyl-[protein] + ATP = O-phospho-L-threonyl-[protein] + ADP + H(+). It catalyses the reaction L-tyrosyl-[protein] + ATP = O-phospho-L-tyrosyl-[protein] + ADP + H(+). With respect to regulation, ras proteins such as HRAS mediate the activation of RAF proteins such as RAF1 or BRAF which in turn activate extracellular signal-regulated kinases (ERK) through MAPK (mitogen-activated protein kinases) and ERK kinases MAP2K1/MEK1 and MAP2K2/MEK2. Activation occurs through phosphorylation of Ser-218 and Ser-222. MAP2K1/MEK1 binds KSR1 or KSR2 releasing the inhibitory intramolecular interaction between KSR1 or KSR2 protein kinase and N-terminal domains. This allows KSR1 or KSR2 dimerization with BRAF leading to BRAF activation and phosphorylation of MAP2K1. MAP2K1/MEK1 is also the target of negative feed-back regulation by its substrate kinases, such as MAPK1/ERK2. These phosphorylate MAP2K1/MEK1 on Thr-292, thereby facilitating dephosphorylation of the activating residues Ser-218 and Ser-222. Inhibited by serine/threonine phosphatase 2A. Its function is as follows. Dual specificity protein kinase which acts as an essential component of the MAP kinase signal transduction pathway. Binding of extracellular ligands such as growth factors, cytokines and hormones to their cell-surface receptors activates RAS and this initiates RAF1 activation. RAF1 then further activates the dual-specificity protein kinases MAP2K1/MEK1 and MAP2K2/MEK2. Both MAP2K1/MEK1 and MAP2K2/MEK2 function specifically in the MAPK/ERK cascade, and catalyze the concomitant phosphorylation of a threonine and a tyrosine residue in a Thr-Glu-Tyr sequence located in the extracellular signal-regulated kinases MAPK3/ERK1 and MAPK1/ERK2, leading to their activation and further transduction of the signal within the MAPK/ERK cascade. Activates BRAF in a KSR1 or KSR2-dependent manner; by binding to KSR1 or KSR2 releases the inhibitory intramolecular interaction between KSR1 or KSR2 protein kinase and N-terminal domains which promotes KSR1 or KSR2-BRAF dimerization and BRAF activation. Depending on the cellular context, this pathway mediates diverse biological functions such as cell growth, adhesion, survival and differentiation, predominantly through the regulation of transcription, metabolism and cytoskeletal rearrangements. One target of the MAPK/ERK cascade is peroxisome proliferator-activated receptor gamma (PPARG), a nuclear receptor that promotes differentiation and apoptosis. MAP2K1/MEK1 has been shown to export PPARG from the nucleus. The MAPK/ERK cascade is also involved in the regulation of endosomal dynamics, including lysosome processing and endosome cycling through the perinuclear recycling compartment (PNRC), as well as in the fragmentation of the Golgi apparatus during mitosis. This Oryctolagus cuniculus (Rabbit) protein is Dual specificity mitogen-activated protein kinase kinase 1 (MAP2K1).